The sequence spans 194 residues: Imidazoleglycerol-phosphate dehydratase (194 aa).

It belongs to the imidazoleglycerol-phosphate dehydratase family.

The protein localises to the cytoplasm. The catalysed reaction is D-erythro-1-(imidazol-4-yl)glycerol 3-phosphate = 3-(imidazol-4-yl)-2-oxopropyl phosphate + H2O. It functions in the pathway amino-acid biosynthesis; L-histidine biosynthesis; L-histidine from 5-phospho-alpha-D-ribose 1-diphosphate: step 6/9. This Listeria monocytogenes serotype 4a (strain HCC23) protein is Imidazoleglycerol-phosphate dehydratase.